The primary structure comprises 132 residues: Aspartate 1-decarboxylase (132 aa).

Serine 25 acts as the Schiff-base intermediate with substrate; via pyruvic acid in catalysis. Serine 25 carries the post-translational modification Pyruvic acid (Ser). Position 57 (threonine 57) interacts with substrate. Residue tyrosine 58 is the Proton donor of the active site. Residue 73 to 75 (GAA) participates in substrate binding.

The protein belongs to the PanD family. In terms of assembly, heterooctamer of four alpha and four beta subunits. It depends on pyruvate as a cofactor. Post-translationally, is synthesized initially as an inactive proenzyme, which is activated by self-cleavage at a specific serine bond to produce a beta-subunit with a hydroxyl group at its C-terminus and an alpha-subunit with a pyruvoyl group at its N-terminus.

The protein localises to the cytoplasm. The catalysed reaction is L-aspartate + H(+) = beta-alanine + CO2. The protein operates within cofactor biosynthesis; (R)-pantothenate biosynthesis; beta-alanine from L-aspartate: step 1/1. Functionally, catalyzes the pyruvoyl-dependent decarboxylation of aspartate to produce beta-alanine. This is Aspartate 1-decarboxylase from Pelotomaculum thermopropionicum (strain DSM 13744 / JCM 10971 / SI).